The following is an 850-amino-acid chain: Depolymerase, capsule KN4-specific (850 aa).

This sequence in the N-terminal section; belongs to the Teseptimavirus fiber family. Homotrimer.

It is found in the virion. In terms of biological role, functions as a receptor binding protein (RBP) and probably mediates the attachment to the host capsular exopolysaccharides. Displays a depolymerase activity that specifically degrades the KN4-type polysaccharides of Klebsiella pneumoniae capsule, which allows the phage to reach the host cell membrane and bind the entry receptor. This is Depolymerase, capsule KN4-specific from Klebsiella pneumoniae (Bacteriophage KN4-1).